A 253-amino-acid polypeptide reads, in one-letter code: HTH-type transcriptional regulator YdeO (253 aa).

The HTH araC/xylS-type domain occupies 137–233 (GKVRNIVNMK…GNSPKRVSKE (97 aa)). 2 consecutive DNA-binding regions (H-T-H motif) follow at residues 154-175 (KDIC…KQEQ) and 200-223 (VNKI…RKHF).

Its function is as follows. Induces the expression of gadE and mdtEF. Could also regulate the expression of other genes involved in acid resistance. The protein is HTH-type transcriptional regulator YdeO (ydeO) of Escherichia coli O6:H1 (strain CFT073 / ATCC 700928 / UPEC).